We begin with the raw amino-acid sequence, 195 residues long: Molybdenum cofactor guanylyltransferase (195 aa).

GTP-binding positions include Leu10–Gly12, Lys23, Asn51, Asp69, and Asp99. Asp99 is a Mg(2+) binding site.

The protein belongs to the MobA family. In terms of assembly, monomer. The cofactor is Mg(2+).

Its subcellular location is the cytoplasm. The catalysed reaction is Mo-molybdopterin + GTP + H(+) = Mo-molybdopterin guanine dinucleotide + diphosphate. Its function is as follows. Transfers a GMP moiety from GTP to Mo-molybdopterin (Mo-MPT) cofactor (Moco or molybdenum cofactor) to form Mo-molybdopterin guanine dinucleotide (Mo-MGD) cofactor. The chain is Molybdenum cofactor guanylyltransferase from Histophilus somni (strain 129Pt) (Haemophilus somnus).